A 457-amino-acid polypeptide reads, in one-letter code: Argininosuccinate lyase (457 aa).

This sequence belongs to the lyase 1 family. Argininosuccinate lyase subfamily.

It is found in the cytoplasm. It carries out the reaction 2-(N(omega)-L-arginino)succinate = fumarate + L-arginine. The protein operates within amino-acid biosynthesis; L-arginine biosynthesis; L-arginine from L-ornithine and carbamoyl phosphate: step 3/3. In Aquifex aeolicus (strain VF5), this protein is Argininosuccinate lyase.